The chain runs to 163 residues: Nucleotide-binding protein ESA_02876 (163 aa).

The protein belongs to the YajQ family.

In terms of biological role, nucleotide-binding protein. The polypeptide is Nucleotide-binding protein ESA_02876 (Cronobacter sakazakii (strain ATCC BAA-894) (Enterobacter sakazakii)).